A 602-amino-acid polypeptide reads, in one-letter code: Elongation factor 4 (602 aa).

Residues Ser7–Ala189 form the tr-type G domain. GTP-binding positions include Asp19 to Thr24 and Asn136 to Asp139.

Belongs to the TRAFAC class translation factor GTPase superfamily. Classic translation factor GTPase family. LepA subfamily.

Its subcellular location is the cell inner membrane. The enzyme catalyses GTP + H2O = GDP + phosphate + H(+). Its function is as follows. Required for accurate and efficient protein synthesis under certain stress conditions. May act as a fidelity factor of the translation reaction, by catalyzing a one-codon backward translocation of tRNAs on improperly translocated ribosomes. Back-translocation proceeds from a post-translocation (POST) complex to a pre-translocation (PRE) complex, thus giving elongation factor G a second chance to translocate the tRNAs correctly. Binds to ribosomes in a GTP-dependent manner. This Gloeobacter violaceus (strain ATCC 29082 / PCC 7421) protein is Elongation factor 4.